The following is a 114-amino-acid chain: Putative movement protein (114 aa).

A helical transmembrane segment spans residues 27-47 (LIGIILLVTVCLTVLWVCIML). Residues 79–114 (RTPFEATGPERERNWEARRQSTTVNPASQPNTGSVF) form a disordered region. Positions 86–97 (GPERERNWEARR) are enriched in basic and acidic residues. Polar residues predominate over residues 98-114 (QSTTVNPASQPNTGSVF).

The protein belongs to the nanovirus movement protein family.

The protein localises to the host cell membrane. May transport viral genome to neighboring plant cells directly through plasmosdesmata, without any budding. The movement protein allows efficient cell to cell propagation, by bypassing the host cell wall barrier. This is Putative movement protein (DNA-M) from Faba bean necrotic yellows virus (isolate Egyptian EV1-93) (FBNYV).